Here is a 122-residue protein sequence, read N- to C-terminus: MIQAETQLNAADNSGAKRLYCIKVLGGTRKRYASVGDIIVVSVKEAIPNAKVKKGDVLKAVVVRTQKEVRRPDGSYIKFDDNSAVLINQAKEPIGTRIFGPVARELRAKQFMKIISLAPEVL.

This sequence belongs to the universal ribosomal protein uL14 family. In terms of assembly, part of the 50S ribosomal subunit. Forms a cluster with proteins L3 and L19. In the 70S ribosome, L14 and L19 interact and together make contacts with the 16S rRNA in bridges B5 and B8.

Its function is as follows. Binds to 23S rRNA. Forms part of two intersubunit bridges in the 70S ribosome. The sequence is that of Large ribosomal subunit protein uL14 from Syntrophobacter fumaroxidans (strain DSM 10017 / MPOB).